Consider the following 60-residue polypeptide: Cytotoxin 5 (60 aa).

4 cysteine pairs are disulfide-bonded: Cys3-Cys21, Cys14-Cys38, Cys42-Cys53, and Cys54-Cys59.

The protein belongs to the three-finger toxin family. Short-chain subfamily. Type IA cytotoxin sub-subfamily. Monomer in solution; Homodimer and oligomer in the presence of negatively charged lipids forming a pore with a size ranging between 20 and 30 Angstroms. In terms of tissue distribution, expressed by the venom gland.

Its subcellular location is the secreted. The protein localises to the target cell membrane. Functionally, basic protein that binds to cell membrane and depolarizes cardiomyocytes. It also possesses lytic activity on many other cells, including red blood cells. Interaction with sulfatides in the cell membrane induces pore formation and cell internalization and is responsible for cytotoxicity in cardiomyocytes. It targets the mitochondrial membrane and induces mitochondrial swelling and fragmentation. Inhibits protein kinases C. It binds to the integrin alpha-V/beta-3 with a moderate affinity. Is cardiotoxic and cytocidal to Yoshida sarcoma cells. The protein is Cytotoxin 5 of Naja atra (Chinese cobra).